The chain runs to 163 residues: Small heat shock protein C1 (163 aa).

Positions 55–163 constitute a sHSP domain; sequence MFYESSSIKS…EQDAKEITIN (109 aa).

The protein belongs to the small heat shock protein (HSP20) family.

In Rickettsia typhi (strain ATCC VR-144 / Wilmington), this protein is Small heat shock protein C1 (hspC1).